A 305-amino-acid polypeptide reads, in one-letter code: Tyrosine recombinase XerC (305 aa).

The 92-residue stretch at 4–95 folds into the Core-binding (CB) domain; it reads TQIQELIIKW…AIKNFYKFLE (92 aa). One can recognise a Tyr recombinase domain in the interval 116-298; the sequence is LLPKALSEEE…SIKHLETAYV (183 aa). Active-site residues include Arg159, Lys182, His250, Arg253, and His276. Catalysis depends on Tyr285, which acts as the O-(3'-phospho-DNA)-tyrosine intermediate.

This sequence belongs to the 'phage' integrase family. XerC subfamily. As to quaternary structure, forms a cyclic heterotetrameric complex composed of two molecules of XerC and two molecules of XerD.

The protein resides in the cytoplasm. Site-specific tyrosine recombinase, which acts by catalyzing the cutting and rejoining of the recombining DNA molecules. The XerC-XerD complex is essential to convert dimers of the bacterial chromosome into monomers to permit their segregation at cell division. It also contributes to the segregational stability of plasmids. The polypeptide is Tyrosine recombinase XerC (Rickettsia bellii (strain RML369-C)).